Here is a 218-residue protein sequence, read N- to C-terminus: 3,4-dihydroxy-2-butanone 4-phosphate synthase (218 aa).

Residues 38 to 39 (RE), aspartate 43, 151 to 155 (RRGHT), and glutamate 175 contribute to the D-ribulose 5-phosphate site. Glutamate 39 contributes to the Mg(2+) binding site. Residues 125-151 (PHAKPEDLARPGHVFPLRARPGGVMTR) form a disordered region. Histidine 154 serves as a coordination point for Mg(2+).

The protein belongs to the DHBP synthase family. In terms of assembly, homodimer. The cofactor is Mg(2+). Requires Mn(2+) as cofactor.

It carries out the reaction D-ribulose 5-phosphate = (2S)-2-hydroxy-3-oxobutyl phosphate + formate + H(+). It functions in the pathway cofactor biosynthesis; riboflavin biosynthesis; 2-hydroxy-3-oxobutyl phosphate from D-ribulose 5-phosphate: step 1/1. Functionally, catalyzes the conversion of D-ribulose 5-phosphate to formate and 3,4-dihydroxy-2-butanone 4-phosphate. This chain is 3,4-dihydroxy-2-butanone 4-phosphate synthase, found in Vibrio parahaemolyticus serotype O3:K6 (strain RIMD 2210633).